A 183-amino-acid chain; its full sequence is Potassium-transporting ATPase KdpC subunit (183 aa).

A helical membrane pass occupies residues 10–30 (ASLLVLSLVTGVAYPLLVTGI).

This sequence belongs to the KdpC family. In terms of assembly, the system is composed of three essential subunits: KdpA, KdpB and KdpC.

It is found in the cell inner membrane. Its function is as follows. Part of the high-affinity ATP-driven potassium transport (or Kdp) system, which catalyzes the hydrolysis of ATP coupled with the electrogenic transport of potassium into the cytoplasm. This subunit acts as a catalytic chaperone that increases the ATP-binding affinity of the ATP-hydrolyzing subunit KdpB by the formation of a transient KdpB/KdpC/ATP ternary complex. This is Potassium-transporting ATPase KdpC subunit from Pseudomonas aeruginosa (strain ATCC 15692 / DSM 22644 / CIP 104116 / JCM 14847 / LMG 12228 / 1C / PRS 101 / PAO1).